We begin with the raw amino-acid sequence, 236 residues long: Lipid A 4'-phosphatase (236 aa).

Helical transmembrane passes span 26-46 (FFYL…FLFF), 58-78 (FIVG…SSFF), 134-153 (YTWT…IYIG), 160-182 (IIPG…LYAR), and 200-220 (GDSI…MLCM).

The protein belongs to the lipid A LpxF 4'-phosphatase family.

It is found in the cell inner membrane. Its pathway is bacterial outer membrane biogenesis; LPS lipid A biosynthesis. In terms of biological role, removes the 4'-phosphate group from lipid A species. Absence of phosphate groups in lipid A renders the bacteria resistant to host-derived cationic antimicrobial peptides (CAMP) and allows it to camouflage itself from the host innate immune response. Removal of the 4'-phosphate may be required to generate the substrate for deacylation of the pentaacyl lipid A to the tetraccylated lipid A species. The protein is Lipid A 4'-phosphatase of Porphyromonas gingivalis (strain ATCC 33277 / DSM 20709 / CIP 103683 / JCM 12257 / NCTC 11834 / 2561).